We begin with the raw amino-acid sequence, 78 residues long: RNA-binding protein Hfq (78 aa).

The Sm domain maps to 9–69; the sequence is DHFLNQLRKE…ISTFAPQRNV (61 aa).

The protein belongs to the Hfq family. As to quaternary structure, homohexamer.

In terms of biological role, RNA chaperone that binds small regulatory RNA (sRNAs) and mRNAs to facilitate mRNA translational regulation in response to envelope stress, environmental stress and changes in metabolite concentrations. Also binds with high specificity to tRNAs. This Halalkalibacterium halodurans (strain ATCC BAA-125 / DSM 18197 / FERM 7344 / JCM 9153 / C-125) (Bacillus halodurans) protein is RNA-binding protein Hfq.